The chain runs to 595 residues: Probable serine/threonine-protein kinase KIN1 homolog (595 aa).

A Protein kinase domain is found at 67–316 (YKLIKTLGKG…LENVKKSKWT (250 aa)). Residues 73–81 (LGKGSCAKV) and Lys-96 each bind ATP. The active-site Proton acceptor is the Asp-188.

This sequence belongs to the protein kinase superfamily. CAMK Ser/Thr protein kinase family. NIM1 subfamily.

It is found in the cytoplasm. The protein resides in the cell membrane. The catalysed reaction is L-seryl-[protein] + ATP = O-phospho-L-seryl-[protein] + ADP + H(+). It catalyses the reaction L-threonyl-[protein] + ATP = O-phospho-L-threonyl-[protein] + ADP + H(+). Functionally, serine/threonine protein kinase involved in regulation of exocytosis. This Enterocytozoon bieneusi (strain H348) (Microsporidian parasite) protein is Probable serine/threonine-protein kinase KIN1 homolog (KIN1).